The primary structure comprises 301 residues: Probable alpha-L-glutamate ligase (301 aa).

The 184-residue stretch at 104–287 (LQLLSRKGVG…IAGMIIEYIE (184 aa)) folds into the ATP-grasp domain. Residues Lys-141, 178-179 (EY), Asp-187, and 211-213 (RSN) each bind ATP. Mg(2+) contacts are provided by Asp-248, Glu-260, and Asn-262. Mn(2+) contacts are provided by Asp-248, Glu-260, and Asn-262.

It belongs to the RimK family. Mg(2+) is required as a cofactor. Mn(2+) serves as cofactor.

The chain is Probable alpha-L-glutamate ligase from Photobacterium profundum (strain SS9).